Consider the following 401-residue polypeptide: MNAKIALTETTNIKEPEPVTTATATKENAFAGASDALGAGIDALFADQGAQYSLIPLDMIQVKTQIRESFEDEENTLEDLAASIKVRGVLQPILLRSNSEGYELIAGERRYRASKLAGLEQIPAYIREMSDEEAEDAQMAENIHRKNLTQIEEAKKIQRDLDKLGSVDAVLEKHQKSRPWLSKMLALLNLPEQAKRLVIENVSADVEVINTVKMVEKINPVKAKELVDDLKKTRGKENARDKAAAVKEEVKPSKKPKADNGEKTPKGRSHEELGQLDVFAGAKFDPFSDAHNGSESPRPLILSPVDVLNRAYTNIFEHGNSPKTILETMPKDEKDRVEGWLHSFYDAGKSVNQDVGRSVIQGFRNGTFSSDGDGAFALVAFLHGVESAEFHLLNVFGSVRK.

The interval 232–272 (KTRGKENARDKAAAVKEEVKPSKKPKADNGEKTPKGRSHEE) is disordered.

Belongs to the ParB family.

The protein is Probable plasmid-partitioning protein ParB of Xylella fastidiosa (strain 9a5c).